Here is a 333-residue protein sequence, read N- to C-terminus: Lipoyl synthase (333 aa).

A disordered region spans residues 1–29 (MTDSAAGATEVATPATPSNKPYDATAKQK). Residues Cys80, Cys85, Cys91, Cys106, Cys110, Cys113, and Ser320 each coordinate [4Fe-4S] cluster. A Radical SAM core domain is found at 91 to 309 (CFGKGTATFM…EEKAYEMGFT (219 aa)).

This sequence belongs to the radical SAM superfamily. Lipoyl synthase family. It depends on [4Fe-4S] cluster as a cofactor.

It is found in the cytoplasm. It catalyses the reaction [[Fe-S] cluster scaffold protein carrying a second [4Fe-4S](2+) cluster] + N(6)-octanoyl-L-lysyl-[protein] + 2 oxidized [2Fe-2S]-[ferredoxin] + 2 S-adenosyl-L-methionine + 4 H(+) = [[Fe-S] cluster scaffold protein] + N(6)-[(R)-dihydrolipoyl]-L-lysyl-[protein] + 4 Fe(3+) + 2 hydrogen sulfide + 2 5'-deoxyadenosine + 2 L-methionine + 2 reduced [2Fe-2S]-[ferredoxin]. Its pathway is protein modification; protein lipoylation via endogenous pathway; protein N(6)-(lipoyl)lysine from octanoyl-[acyl-carrier-protein]: step 2/2. Catalyzes the radical-mediated insertion of two sulfur atoms into the C-6 and C-8 positions of the octanoyl moiety bound to the lipoyl domains of lipoate-dependent enzymes, thereby converting the octanoylated domains into lipoylated derivatives. The sequence is that of Lipoyl synthase from Ralstonia pickettii (strain 12J).